Reading from the N-terminus, the 161-residue chain is Pathogenesis-related protein 1 (161 aa).

A signal peptide spans 1–26 (MNFTGYSRFLIVFVALVGALVLPSKA). One can recognise an SCP domain in the interval 34–149 (LRVHNQARGA…NGGTIISCNY (116 aa)). Cystine bridges form between Cys70/Cys138, Cys113/Cys117, and Cys133/Cys147.

This sequence belongs to the CRISP family.

It localises to the secreted. The protein resides in the extracellular space. The protein localises to the apoplast. Functionally, partially responsible for acquired pathogen resistance. The sequence is that of Pathogenesis-related protein 1 from Arabidopsis thaliana (Mouse-ear cress).